The primary structure comprises 411 residues: MRRRRAGGRTMVERASKFVLVVAGSVCFMLILYQYAGPGLSLGAPGGRAPPDDLDLFPTPDPHYEKKYYFPVRELERSLRFDMKGDDVIVFLHIQKTGGTTFGRHLVQNVRLEVPCDCRPGQKKCTCYRPNRRETWLFSRFSTGWSCGLHADWTELTNCVPGVLDRRDSAALRTPRKFYYITLLRDPVSRYLSEWRHVQRGATWKTSLHMCDGRTPTPEELPPCYEGTDWSGCTLQEFMDCPYNLANNRQVRMLADLSLVGCYNLSFIPEGKRAQLLLESAKKNLRGMAFFGLTEFQRKTQYLFERTFNLKFIRPFMQYNSTRAGGVEVDEDTIRRIEELNDLDMQLYDYAKDLFQQRYQYKRQLERREQRLRSREERLLHRAKEALPREDADEPGRVPTEDYMSHIIEKW.

The Cytoplasmic portion of the chain corresponds to 11 to 17; the sequence is MVERASK. The helical; Signal-anchor for type II membrane protein transmembrane segment at 18–37 threads the bilayer; that stretch reads FVLVVAGSVCFMLILYQYAG. The Lumenal portion of the chain corresponds to 38–411; sequence PGLSLGAPGG…DYMSHIIEKW (374 aa). 93–101 is a 3'-phosphoadenylyl sulfate binding site; the sequence is HIQKTGGTT. Residues 123-124, Arg-140, Trp-145, and His-150 contribute to the substrate site; that span reads KK. Residue His-150 is the Proton acceptor of the active site. Residues Arg-185 and Ser-193 each contribute to the 3'-phosphoadenylyl sulfate site. His-197 and Trp-204 together coordinate substrate. An N-linked (GlcNAc...) asparagine glycan is attached at Asn-264. 317 to 319 provides a ligand contact to 3'-phosphoadenylyl sulfate; it reads MQY. A glycan (N-linked (GlcNAc...) asparagine) is linked at Asn-320. 323–324 contacts 3'-phosphoadenylyl sulfate; that stretch reads RA. Positions 352–387 form a coiled coil; sequence KDLFQQRYQYKRQLERREQRLRSREERLLHRAKEAL.

It belongs to the sulfotransferase 6 family. N-glycosylated. Expressed in fetal brain.

Its subcellular location is the membrane. The catalysed reaction is alpha-D-glucosaminyl-[heparan sulfate](n) + 3'-phosphoadenylyl sulfate = 6-sulfo-alpha-D-glucosaminyl-[heparan sulfate](n) + adenosine 3',5'-bisphosphate + H(+). Functionally, 6-O-sulfation enzyme which catalyzes the transfer of sulfate from 3'-phosphoadenosine 5'-phosphosulfate (PAPS) to position 6 of the N-sulfoglucosamine residue (GlcNS) of heparan sulfate. Critical for normal neuronal development where it may play a role in neuron branching. May also play a role in limb development. May prefer iduronic acid. This is Heparan-sulfate 6-O-sulfotransferase 1 from Homo sapiens (Human).